A 112-amino-acid chain; its full sequence is uncharacterized protein (112 aa).

The disordered stretch occupies residues Lys-90–Leu-112.

This is an uncharacterized protein from Buchnera aphidicola subsp. Acyrthosiphon pisum (strain APS) (Acyrthosiphon pisum symbiotic bacterium).